We begin with the raw amino-acid sequence, 177 residues long: Bifunctional protein PyrR (177 aa).

A PRPP-binding motif is present at residues 99 to 111 (VVLVDDVLFTGRT).

The protein belongs to the purine/pyrimidine phosphoribosyltransferase family. PyrR subfamily.

The catalysed reaction is UMP + diphosphate = 5-phospho-alpha-D-ribose 1-diphosphate + uracil. Regulates the transcription of the pyrimidine nucleotide (pyr) operon in response to exogenous pyrimidines. In terms of biological role, also displays a weak uracil phosphoribosyltransferase activity which is not physiologically significant. This Geobacter sp. (strain M21) protein is Bifunctional protein PyrR.